The primary structure comprises 210 residues: ATP-dependent Clp protease proteolytic subunit (210 aa).

S107 (nucleophile) is an active-site residue. H132 is an active-site residue.

The protein belongs to the peptidase S14 family. In terms of assembly, fourteen ClpP subunits assemble into 2 heptameric rings which stack back to back to give a disk-like structure with a central cavity, resembling the structure of eukaryotic proteasomes.

The protein localises to the cytoplasm. The enzyme catalyses Hydrolysis of proteins to small peptides in the presence of ATP and magnesium. alpha-casein is the usual test substrate. In the absence of ATP, only oligopeptides shorter than five residues are hydrolyzed (such as succinyl-Leu-Tyr-|-NHMec, and Leu-Tyr-Leu-|-Tyr-Trp, in which cleavage of the -Tyr-|-Leu- and -Tyr-|-Trp bonds also occurs).. Functionally, cleaves peptides in various proteins in a process that requires ATP hydrolysis. Has a chymotrypsin-like activity. Plays a major role in the degradation of misfolded proteins. The protein is ATP-dependent Clp protease proteolytic subunit of Cereibacter sphaeroides (strain ATCC 17029 / ATH 2.4.9) (Rhodobacter sphaeroides).